A 303-amino-acid polypeptide reads, in one-letter code: uncharacterized protein (303 aa).

A signal peptide spans 1–24 (MNRIALVFLYSLFLFNLAIGRVES). Residue Asn-116 is glycosylated (N-linked (GlcNAc...) asparagine). The disordered stretch occupies residues 124 to 179 (FTRQQQKKSHDDDDDDDDSDSDESKEEEEKKKRDRKHRRDKRQAITQGSQNNTDPN). A compositionally biased stretch (acidic residues) spans 135–149 (DDDDDDDSDSDESKE). Residues 155-164 (KRDRKHRRDK) are compositionally biased toward basic residues. Residues 167–178 (AITQGSQNNTDP) are compositionally biased toward polar residues.

This is an uncharacterized protein from Caenorhabditis elegans.